We begin with the raw amino-acid sequence, 217 residues long: Probable transaldolase (217 aa).

K83 acts as the Schiff-base intermediate with substrate in catalysis.

Belongs to the transaldolase family. Type 3B subfamily.

The protein localises to the cytoplasm. It catalyses the reaction D-sedoheptulose 7-phosphate + D-glyceraldehyde 3-phosphate = D-erythrose 4-phosphate + beta-D-fructose 6-phosphate. Its pathway is carbohydrate degradation; pentose phosphate pathway; D-glyceraldehyde 3-phosphate and beta-D-fructose 6-phosphate from D-ribose 5-phosphate and D-xylulose 5-phosphate (non-oxidative stage): step 2/3. Its function is as follows. Transaldolase is important for the balance of metabolites in the pentose-phosphate pathway. This Novosphingobium aromaticivorans (strain ATCC 700278 / DSM 12444 / CCUG 56034 / CIP 105152 / NBRC 16084 / F199) protein is Probable transaldolase.